The following is a 183-amino-acid chain: DELTA-miturgitoxin-Cp1b (183 aa).

Residues M1–S20 form the signal peptide. A propeptide spanning residues E21–R47 is cleaved from the precursor. A Processing quadruplet motif motif is present at residues D44–R47. 8 disulfide bridges follow: C51–C66, C58–C75, C65–C88, C77–C86, C115–C130, C122–C139, C129–C157, and C141–C155. Residues Q164–I177 form a predicted alpha-helix region. W181 carries the tryptophan amide modification.

It belongs to the neurotoxin 19 (CSTX) family. Double-CSTX subfamily. Cleavage of the propeptide depends on the processing quadruplet motif (XXXR, with at least one of X being E). Expressed by the venom gland.

It is found in the secreted. It localises to the target cell membrane. Its function is as follows. Spider venom toxin that exhibits cytolytic activity by forming an alpha-helix across the membrane. Lethal to insect larvae. Causes instant paralysis and death in the larvae of the flesh fly (S.carnaria) at doses of 20 ug/g, at doses of less than 10 ug/g causes reversible paralysis. Has cytolytic activity against insect Sf9 cells. Causes stable and irreversible depolarization of fly muscle fibers, leading to contracture at higher toxin concentrations. Destabilizes membranes. The chain is DELTA-miturgitoxin-Cp1b from Cheiracanthium punctorium (Yellow sac spider).